Here is a 262-residue protein sequence, read N- to C-terminus: 2-oxo-tetronate isomerase (262 aa).

Glu143 (proton donor/acceptor) is an active-site residue. Positions 143, 178, 204, and 240 each coordinate Mg(2+). The active-site Proton donor/acceptor is Glu240.

It belongs to the hyi family. OtnI subfamily.

The catalysed reaction is 2-dehydro-L-erythronate = 3-dehydro-L-erythronate. It catalyses the reaction 2-dehydro-D-erythronate = 3-dehydro-D-erythronate. Functionally, catalyzes the isomerization of 2-oxo-tetronate to 3-oxo-tetronate. The protein is 2-oxo-tetronate isomerase of Pectobacterium atrosepticum (strain SCRI 1043 / ATCC BAA-672) (Erwinia carotovora subsp. atroseptica).